A 325-amino-acid polypeptide reads, in one-letter code: Biotin synthase (325 aa).

One can recognise a Radical SAM core domain in the interval Val-49 to Arg-279. [4Fe-4S] cluster is bound by residues Cys-66, Cys-70, and Cys-73. [2Fe-2S] cluster contacts are provided by Cys-144, Cys-204, and Arg-274.

This sequence belongs to the radical SAM superfamily. Biotin synthase family. As to quaternary structure, homodimer. The cofactor is [4Fe-4S] cluster. Requires [2Fe-2S] cluster as cofactor.

The catalysed reaction is (4R,5S)-dethiobiotin + (sulfur carrier)-SH + 2 reduced [2Fe-2S]-[ferredoxin] + 2 S-adenosyl-L-methionine = (sulfur carrier)-H + biotin + 2 5'-deoxyadenosine + 2 L-methionine + 2 oxidized [2Fe-2S]-[ferredoxin]. The protein operates within cofactor biosynthesis; biotin biosynthesis; biotin from 7,8-diaminononanoate: step 2/2. In terms of biological role, catalyzes the conversion of dethiobiotin (DTB) to biotin by the insertion of a sulfur atom into dethiobiotin via a radical-based mechanism. This chain is Biotin synthase, found in Carboxydothermus hydrogenoformans (strain ATCC BAA-161 / DSM 6008 / Z-2901).